The sequence spans 332 residues: Phosphate acyltransferase (332 aa).

Belongs to the PlsX family. As to quaternary structure, homodimer. Probably interacts with PlsY.

It is found in the cytoplasm. The catalysed reaction is a fatty acyl-[ACP] + phosphate = an acyl phosphate + holo-[ACP]. The protein operates within lipid metabolism; phospholipid metabolism. Its function is as follows. Catalyzes the reversible formation of acyl-phosphate (acyl-PO(4)) from acyl-[acyl-carrier-protein] (acyl-ACP). This enzyme utilizes acyl-ACP as fatty acyl donor, but not acyl-CoA. This is Phosphate acyltransferase from Streptococcus mutans serotype c (strain ATCC 700610 / UA159).